The chain runs to 301 residues: 33 kDa chaperonin (301 aa).

Disulfide bonds link C239–C241 and C272–C275.

It belongs to the HSP33 family. Post-translationally, under oxidizing conditions two disulfide bonds are formed involving the reactive cysteines. Under reducing conditions zinc is bound to the reactive cysteines and the protein is inactive.

The protein localises to the cytoplasm. Its function is as follows. Redox regulated molecular chaperone. Protects both thermally unfolding and oxidatively damaged proteins from irreversible aggregation. Plays an important role in the bacterial defense system toward oxidative stress. The chain is 33 kDa chaperonin from Trichormus variabilis (strain ATCC 29413 / PCC 7937) (Anabaena variabilis).